We begin with the raw amino-acid sequence, 258 residues long: Gene 3 protein (258 aa).

Over residues 163-176 (STENLLGQTQSSTH) the composition is skewed to polar residues. Residues 163-258 (STENLLGQTQ…TRRYPPSFFK (96 aa)) are disordered. The span at 214 to 240 (SIREETVSGMARAREECNSPSEHDRLT) shows a compositional bias: basic and acidic residues.

This chain is Gene 3 protein, found in Equine herpesvirus 1 (strain Kentucky A) (EHV-1).